We begin with the raw amino-acid sequence, 436 residues long: Indole-3-acetyl-aspartic acid hydrolase (436 aa).

The protein belongs to the peptidase M20 family. In terms of assembly, monomer.

It carries out the reaction (indol-3-yl)acetyl-L-aspartate + H2O = (indol-3-yl)acetate + L-aspartate. In terms of biological role, hydrolyzes indole-3-acetyl-aspartate (IAA-Asp) to indole-3-acetic acid (IAA). Shows an exclusively high substrate specificity for IAA-Asp. The sequence is that of Indole-3-acetyl-aspartic acid hydrolase from Enterobacter agglomerans (Erwinia herbicola).